We begin with the raw amino-acid sequence, 399 residues long: Phosphoglycerate kinase (399 aa).

Substrate is bound by residues 21–23 (DFN), arginine 36, 59–62 (HLGR), arginine 120, and arginine 158. Residues lysine 209, glycine 297, glutamate 328, and 355–358 (GGDS) contribute to the ATP site.

The protein belongs to the phosphoglycerate kinase family. In terms of assembly, monomer.

The protein resides in the cytoplasm. The enzyme catalyses (2R)-3-phosphoglycerate + ATP = (2R)-3-phospho-glyceroyl phosphate + ADP. It functions in the pathway carbohydrate degradation; glycolysis; pyruvate from D-glyceraldehyde 3-phosphate: step 2/5. The protein is Phosphoglycerate kinase of Streptococcus thermophilus (strain CNRZ 1066).